The chain runs to 300 residues: Transcription initiation factor IIB (300 aa).

The segment at 3 to 34 (KQRVCPVCGSTEFIYDPERGEIVCARCGYVIE) adopts a TFIIB-type zinc-finger fold. C7, C10, C26, and C29 together coordinate Zn(2+). 2 tandem repeats follow at residues 114-197 (SELD…ARNL) and 210-291 (DYVN…ELVE).

It belongs to the TFIIB family.

Its function is as follows. Stabilizes TBP binding to an archaeal box-A promoter. Also responsible for recruiting RNA polymerase II to the pre-initiation complex (DNA-TBP-TFIIB). This Pyrococcus abyssi (strain GE5 / Orsay) protein is Transcription initiation factor IIB.